Reading from the N-terminus, the 304-residue chain is Galactofuranosyltransferase GlfT1 (304 aa).

Belongs to the glycosyltransferase 2 family. Is probably part of an AG biosynthetic complex.

The protein resides in the cell membrane. Its subcellular location is the secreted. The protein localises to the cell wall. The catalysed reaction is alpha-L-rhamnosyl-(1-&gt;3)-N-acetyl-alpha-D-glucosaminyl-diphospho-trans,octa-cis-decaprenol + 2 UDP-alpha-D-galactofuranose = beta-D-galactofuranosyl-(1-&gt;5)-beta-D-galactofuranosyl-(1-&gt;4)-alpha-L-rhamnosyl-(1-&gt;3)-N-acetyl-alpha-D-glucosaminyl-diphospho-trans,octa-cis-decaprenol + 2 UDP + 2 H(+). Its pathway is cell wall biogenesis; cell wall polysaccharide biosynthesis. Functionally, involved in the biosynthesis of the arabinogalactan (AG) region of the mycolylarabinogalactan-peptidoglycan (mAGP) complex, an essential component of the mycobacterial cell wall. Catalyzes the transfer of the first two galactofuranosyl (Galf) units from UDP-galactofuranose (UDP-Galf) onto the rhamnosyl-GlcNAc-diphospho-decaprenol (Rha-GlcNAc-PP-C50) acceptor, yielding galactofuranosyl-galactofuranosyl-rhamnosyl-GlcNAc-diphospho-decaprenol (Galf-Galf-Rha-GlcNAc-PP-C50). Thus, GlfT1 is the initiator of galactan synthesis, while GlfT2 continues with the subsequent polymerization events. In Mycobacterium tuberculosis (strain CDC 1551 / Oshkosh), this protein is Galactofuranosyltransferase GlfT1.